A 153-amino-acid chain; its full sequence is MPLLLTGQAFRRDLEANGCLAVQAPLEGGAETRLLRRLRGAGYSTRMTSARGLGDPEVFLTQKHGIRPPHLGHQSVGRGAAVGEVQEVAPQLGDLFESDAPVALWLLEGQVLSRSELLSLCDLCKREPRLRIIVEMGGARSLKWEPMTTYLKA.

This sequence belongs to the complex I NdhN subunit family. NDH-1 can be composed of about 15 different subunits; different subcomplexes with different compositions have been identified which probably have different functions.

The protein localises to the cellular thylakoid membrane. The enzyme catalyses a plastoquinone + NADH + (n+1) H(+)(in) = a plastoquinol + NAD(+) + n H(+)(out). It carries out the reaction a plastoquinone + NADPH + (n+1) H(+)(in) = a plastoquinol + NADP(+) + n H(+)(out). Its function is as follows. NDH-1 shuttles electrons from an unknown electron donor, via FMN and iron-sulfur (Fe-S) centers, to quinones in the respiratory and/or the photosynthetic chain. The immediate electron acceptor for the enzyme in this species is believed to be plastoquinone. Couples the redox reaction to proton translocation, and thus conserves the redox energy in a proton gradient. Cyanobacterial NDH-1 also plays a role in inorganic carbon-concentration. This chain is NAD(P)H-quinone oxidoreductase subunit N, found in Synechococcus sp. (strain CC9605).